Consider the following 455-residue polypeptide: Probable hexose phosphate transport protein (455 aa).

Helical transmembrane passes span 34–54, 70–90, 113–133, 161–181, and 185–205; these read IFYS…SFTF, LGII…VSGV, IFFG…LNGW, VWST…GFII, and GWRG…LVLI. Positions 219–242 are disordered; sequence PIEKYKRDPHHAHHEGKSASEGTE. Transmembrane regions (helical) follow at residues 257–277, 302–322, 331–351, 363–383, 394–414, and 424–444; these read YVLT…IYIV, FCVS…GWLS, GPMN…MWFS, LLFV…LAAA, ASGF…YPLG, and GFFI…LPTW.

This sequence belongs to the major facilitator superfamily. Organophosphate:Pi antiporter (OPA) (TC 2.A.1.4) family.

It localises to the cell membrane. Its function is as follows. Transport protein for sugar phosphate uptake. This Chlamydia pneumoniae (Chlamydophila pneumoniae) protein is Probable hexose phosphate transport protein (uhpC).